The following is an 84-amino-acid chain: Anaphase-promoting complex subunit 11 (84 aa).

The RING-type; atypical zinc finger occupies 34 to 77 (CPDCKLPGDDCPLIWGACNHAFHLHCILKWVNSQTSQAHCPMCR).

Belongs to the RING-box family. As to quaternary structure, part of the APC/C complex composed of at least 10 subunits. Interacts with APC2.

Its subcellular location is the cytoplasm. It localises to the nucleus. It participates in protein modification; protein ubiquitination. In terms of biological role, component of the anaphase promoting complex/cyclosome (APC/C), a cell cycle-regulated E3 ubiquitin-protein ligase complex that controls progression through mitosis and the G1 phase of the cell cycle. The APC/C complex controls several key steps in the cell cycle by mediating ubiquitination and subsequent degradation of target proteins such as cyclins. The APC/C complex is required for the female gametophyte development and is involved in several aspect of development by controlling cell division and cell elongation. Involved in the control of endoreduplication. May recruit the E2 ubiquitin-conjugating enzymes to the complex. In Arabidopsis thaliana (Mouse-ear cress), this protein is Anaphase-promoting complex subunit 11.